We begin with the raw amino-acid sequence, 864 residues long: Bifunctional uridylyltransferase/uridylyl-removing enzyme (864 aa).

Residues 1 to 328 (MLFPYFPLSE…QTNEPVQVRL (328 aa)) form a uridylyltransferase region. The uridylyl-removing stretch occupies residues 329–686 (LDKEFQCVNN…ISNRFSEGGT (358 aa)). Residues 446–562 (VDEHIVRTLL…LHFAEAVQNN (117 aa)) enclose the HD domain. ACT domains are found at residues 687 to 766 (EIFV…TFRA) and 793 to 864 (EMEL…LEPK).

Belongs to the GlnD family. Requires Mg(2+) as cofactor.

It catalyses the reaction [protein-PII]-L-tyrosine + UTP = [protein-PII]-uridylyl-L-tyrosine + diphosphate. It carries out the reaction [protein-PII]-uridylyl-L-tyrosine + H2O = [protein-PII]-L-tyrosine + UMP + H(+). With respect to regulation, uridylyltransferase (UTase) activity is inhibited by glutamine, while glutamine activates uridylyl-removing (UR) activity. Its function is as follows. Modifies, by uridylylation and deuridylylation, the PII regulatory proteins (GlnB and homologs), in response to the nitrogen status of the cell that GlnD senses through the glutamine level. Under low glutamine levels, catalyzes the conversion of the PII proteins and UTP to PII-UMP and PPi, while under higher glutamine levels, GlnD hydrolyzes PII-UMP to PII and UMP (deuridylylation). Thus, controls uridylylation state and activity of the PII proteins, and plays an important role in the regulation of nitrogen assimilation and metabolism. This chain is Bifunctional uridylyltransferase/uridylyl-removing enzyme, found in Pasteurella multocida (strain Pm70).